We begin with the raw amino-acid sequence, 327 residues long: Acetaldehyde dehydrogenase 5 (327 aa).

Position 15-18 (15-18) interacts with NAD(+); the sequence is SGNI. Cys-133 functions as the Acyl-thioester intermediate in the catalytic mechanism. NAD(+)-binding positions include 164–172 and Asn-297; that span reads SAGPGTRAN.

This sequence belongs to the acetaldehyde dehydrogenase family.

The catalysed reaction is acetaldehyde + NAD(+) + CoA = acetyl-CoA + NADH + H(+). The chain is Acetaldehyde dehydrogenase 5 from Rhodococcus jostii (strain RHA1).